We begin with the raw amino-acid sequence, 154 residues long: Large ribosomal subunit protein uL30 (154 aa).

Residues 114 to 139 (PVLRLHPPRGGHRGQKHPTAEGGQIG) form a disordered region. Residues 119–129 (HPPRGGHRGQK) show a composition bias toward basic residues.

The protein belongs to the universal ribosomal protein uL30 family. In terms of assembly, part of the 50S ribosomal subunit.

In Haloquadratum walsbyi (strain DSM 16790 / HBSQ001), this protein is Large ribosomal subunit protein uL30.